The sequence spans 85 residues: Antibacterial factor-related peptide 2 (85 aa).

The N-terminal stretch at 1–17 (MFVRSLFLALLLATIVA) is a signal peptide. The propeptide occupies 82 to 85 (IKRG).

Expressed in the pharynx (at protein level). Detected in pharyngeal neurons and secretory cells.

It localises to the secreted. In terms of biological role, exhibits antimicrobial activity against the Gram-positive bacteria B.subtilis IFO 3134, K.varians MAFF 118076 and S.aureus ATCC 6538P, the Gram-negative bacteria A.tumefaciens MAFF 1001, B.bacteriovorus MAFF 106101 and K.pneumoniae MAFF 519002, and the yeasts C.krusei MAFF 114085, K.thermotolerans MAFF 113848 and T.delbrueckii MAFF 113811. The polypeptide is Antibacterial factor-related peptide 2 (Caenorhabditis elegans).